Here is a 123-residue protein sequence, read N- to C-terminus: Small ribosomal subunit protein bS16 (123 aa).

The tract at residues 86–123 (PVRAEQTKQPQPKAKAQQRAKDQAERDAAAAAEAAAGE) is disordered. The span at 93-102 (KQPQPKAKAQ) shows a compositional bias: low complexity. Over residues 104–113 (RAKDQAERDA) the composition is skewed to basic and acidic residues. The segment covering 114–123 (AAAAEAAAGE) has biased composition (low complexity).

This sequence belongs to the bacterial ribosomal protein bS16 family.

This Paramagnetospirillum magneticum (strain ATCC 700264 / AMB-1) (Magnetospirillum magneticum) protein is Small ribosomal subunit protein bS16.